Here is a 289-residue protein sequence, read N- to C-terminus: Purine nucleoside phosphorylase (289 aa).

Met-1 is subject to N-acetylmethionine. Phosphate-binding positions include Ser-33, His-64, and 84–86; that span reads RFH. Tyr-88 contributes to the a purine D-ribonucleoside binding site. Phosphate is bound at residue Ala-116. 2 residues coordinate a purine D-ribonucleoside: Glu-201 and Met-219. Ser-220 contributes to the phosphate binding site. Residues Asn-243 and His-257 each coordinate a purine D-ribonucleoside.

It belongs to the PNP/MTAP phosphorylase family. As to quaternary structure, homotrimer.

It is found in the cytoplasm. The catalysed reaction is inosine + phosphate = alpha-D-ribose 1-phosphate + hypoxanthine. It carries out the reaction guanosine + phosphate = alpha-D-ribose 1-phosphate + guanine. It catalyses the reaction 2'-deoxyguanosine + phosphate = 2-deoxy-alpha-D-ribose 1-phosphate + guanine. The enzyme catalyses 2'-deoxyinosine + phosphate = 2-deoxy-alpha-D-ribose 1-phosphate + hypoxanthine. It functions in the pathway purine metabolism; purine nucleoside salvage. Catalyzes the phosphorolytic breakdown of the N-glycosidic bond in the beta-(deoxy)ribonucleoside molecules, with the formation of the corresponding free purine bases and pentose-1-phosphate. Preferentially acts on 6-oxopurine nucleosides including inosine and guanosine. This Mus musculus (Mouse) protein is Purine nucleoside phosphorylase (Pnp).